A 214-amino-acid chain; its full sequence is Orotidine 5'-phosphate decarboxylase (214 aa).

Residues Asp11, Lys33, 59-68 (DFKIADIPNT), Ser114, 164-174 (PGIGSQGGRAS), Gly187, and Arg188 contribute to the substrate site. Lys61 (proton donor) is an active-site residue.

Belongs to the OMP decarboxylase family. Type 1 subfamily. In terms of assembly, homodimer.

It carries out the reaction orotidine 5'-phosphate + H(+) = UMP + CO2. It functions in the pathway pyrimidine metabolism; UMP biosynthesis via de novo pathway; UMP from orotate: step 2/2. Catalyzes the decarboxylation of orotidine 5'-monophosphate (OMP) to uridine 5'-monophosphate (UMP). The polypeptide is Orotidine 5'-phosphate decarboxylase (Thermoplasma acidophilum (strain ATCC 25905 / DSM 1728 / JCM 9062 / NBRC 15155 / AMRC-C165)).